The sequence spans 217 residues: Probable GTP-binding protein EngB (217 aa).

Positions 37–214 (DGVEIAFAGR…RAAMAKLLEE (178 aa)) constitute an EngB-type G domain. GTP contacts are provided by residues 45–52 (GRSNVGKS), 72–76 (GRTQE), 92–95 (DMPG), 159–162 (TKAD), and 193–195 (TSS). Ser-52 and Thr-74 together coordinate Mg(2+).

It belongs to the TRAFAC class TrmE-Era-EngA-EngB-Septin-like GTPase superfamily. EngB GTPase family. The cofactor is Mg(2+).

In terms of biological role, necessary for normal cell division and for the maintenance of normal septation. The sequence is that of Probable GTP-binding protein EngB from Bradyrhizobium diazoefficiens (strain JCM 10833 / BCRC 13528 / IAM 13628 / NBRC 14792 / USDA 110).